A 510-amino-acid chain; its full sequence is Histidine ammonia-lyase (510 aa).

Residues 143–145 (ASG) constitute a cross-link (5-imidazolinone (Ala-Gly)). Ser-144 is modified (2,3-didehydroalanine (Ser)).

This sequence belongs to the PAL/histidase family. Contains an active site 4-methylidene-imidazol-5-one (MIO), which is formed autocatalytically by cyclization and dehydration of residues Ala-Ser-Gly.

Its subcellular location is the cytoplasm. The enzyme catalyses L-histidine = trans-urocanate + NH4(+). Its pathway is amino-acid degradation; L-histidine degradation into L-glutamate; N-formimidoyl-L-glutamate from L-histidine: step 1/3. The chain is Histidine ammonia-lyase from Shewanella piezotolerans (strain WP3 / JCM 13877).